Here is a 204-residue protein sequence, read N- to C-terminus: Holliday junction branch migration complex subunit RuvA (204 aa).

A domain I region spans residues 1–64 (MIGRVTGILV…EDAHLLFGFS (64 aa)). The tract at residues 65–143 (HKQDRSLFRE…GLQQTDFFIK (79 aa)) is domain II. The interval 144–155 (SSHLPGIKCSKL) is flexible linker. Residues 156-204 (DQSLQLDEAVSALIALGYKPIEAEKMVKKVLKADLTSEQLIREALKAAL) are domain III.

The protein belongs to the RuvA family. As to quaternary structure, homotetramer. Forms an RuvA(8)-RuvB(12)-Holliday junction (HJ) complex. HJ DNA is sandwiched between 2 RuvA tetramers; dsDNA enters through RuvA and exits via RuvB. An RuvB hexamer assembles on each DNA strand where it exits the tetramer. Each RuvB hexamer is contacted by two RuvA subunits (via domain III) on 2 adjacent RuvB subunits; this complex drives branch migration. In the full resolvosome a probable DNA-RuvA(4)-RuvB(12)-RuvC(2) complex forms which resolves the HJ.

It is found in the cytoplasm. In terms of biological role, the RuvA-RuvB-RuvC complex processes Holliday junction (HJ) DNA during genetic recombination and DNA repair, while the RuvA-RuvB complex plays an important role in the rescue of blocked DNA replication forks via replication fork reversal (RFR). RuvA specifically binds to HJ cruciform DNA, conferring on it an open structure. The RuvB hexamer acts as an ATP-dependent pump, pulling dsDNA into and through the RuvAB complex. HJ branch migration allows RuvC to scan DNA until it finds its consensus sequence, where it cleaves and resolves the cruciform DNA. The polypeptide is Holliday junction branch migration complex subunit RuvA (Histophilus somni (strain 2336) (Haemophilus somnus)).